The primary structure comprises 100 residues: Urease subunit gamma (100 aa).

The protein belongs to the urease gamma subunit family. In terms of assembly, heterotrimer of UreA (gamma), UreB (beta) and UreC (alpha) subunits. Three heterotrimers associate to form the active enzyme.

It localises to the cytoplasm. It catalyses the reaction urea + 2 H2O + H(+) = hydrogencarbonate + 2 NH4(+). Its pathway is nitrogen metabolism; urea degradation; CO(2) and NH(3) from urea (urease route): step 1/1. The protein is Urease subunit gamma of Yersinia rohdei.